We begin with the raw amino-acid sequence, 353 residues long: Fe(3+) ions import ATP-binding protein FbpC (353 aa).

The ABC transporter domain maps to 9–239; that stretch reads VTFQNVRKSF…PASSFIADFM (231 aa). Residue 41-48 participates in ATP binding; the sequence is GPSGCGKT.

It belongs to the ABC transporter superfamily. Fe(3+) ion importer (TC 3.A.1.10) family. As to quaternary structure, the complex is composed of two ATP-binding proteins (FbpC), two transmembrane proteins (FbpB) and a solute-binding protein (FbpA).

The protein resides in the cell inner membrane. The enzyme catalyses Fe(3+)(out) + ATP + H2O = Fe(3+)(in) + ADP + phosphate + H(+). Its function is as follows. Part of the ABC transporter complex FbpABC involved in Fe(3+) ions import. Responsible for energy coupling to the transport system. This chain is Fe(3+) ions import ATP-binding protein FbpC, found in Rhizobium etli (strain ATCC 51251 / DSM 11541 / JCM 21823 / NBRC 15573 / CFN 42).